Here is a 249-residue protein sequence, read N- to C-terminus: Thrombin-like enzyme barnettobin (249 aa).

The signal sequence occupies residues 1–10 (APKELQVSYA). A propeptide spanning residues 11 to 16 (HKSSEL) is cleaved from the precursor. In terms of domain architecture, Peptidase S1 spans 17 to 240 (VIGGDECDIN…YPPWIQSIIA (224 aa)). 6 disulfide bridges follow: C23–C154, C41–C57, C89–C247, C133–C201, C165–C180, and C191–C216. Residues H56 and D101 each act as charge relay system in the active site. N-linked (GlcNAc...) asparagine glycosylation is found at N145 and N161. S195 serves as the catalytic Charge relay system. N242 carries an N-linked (GlcNAc...) asparagine glycan.

Belongs to the peptidase S1 family. Snake venom subfamily. Monomer. Post-translationally, glycoprotein, contains approx. 52% carbohydrate which could be removed by N-glycosidase. Glycosylation is important, since deglycosylated barnettobin loses its clotting and defibrinogenating effects. As to expression, expressed by the venom gland.

Its subcellular location is the secreted. Its activity is regulated as follows. Both coagulant and amidolytic activities are inhibited by PMSF. Amidolytic activity is partially inhibited by DTT, chymostatin, SBTI and TLCK, but not by heparin and EDTA. In terms of biological role, thrombin-like snake venom serine protease that releases only fibrinopeptide A from human Aalpha chain of fibrinogen (specific coagulant activity was 251.7 NIH thrombin units/mg). Also shows fibrino(geno)lytic activities in vitro and defibrinogenating effects in vivo. The sequence is that of Thrombin-like enzyme barnettobin from Bothrops barnetti (Barnett's lancehead).